The following is a 331-amino-acid chain: Ornithine carbamoyltransferase (331 aa).

Residues 55 to 58 (STRT), Gln-82, Arg-106, and 133 to 136 (HPTQ) contribute to the carbamoyl phosphate site. Residues Asn-166, Asp-230, and 234-235 (SM) contribute to the L-ornithine site. Carbamoyl phosphate-binding positions include 272 to 273 (CL) and Arg-317.

This sequence belongs to the aspartate/ornithine carbamoyltransferase superfamily. OTCase family.

The protein localises to the cytoplasm. The enzyme catalyses carbamoyl phosphate + L-ornithine = L-citrulline + phosphate + H(+). It functions in the pathway amino-acid biosynthesis; L-arginine biosynthesis; L-arginine from L-ornithine and carbamoyl phosphate: step 1/3. In terms of biological role, reversibly catalyzes the transfer of the carbamoyl group from carbamoyl phosphate (CP) to the N(epsilon) atom of ornithine (ORN) to produce L-citrulline. The protein is Ornithine carbamoyltransferase of Neisseria gonorrhoeae (strain ATCC 700825 / FA 1090).